A 487-amino-acid polypeptide reads, in one-letter code: WAS/WASL-interacting protein family member 1 (487 aa).

A compositionally biased stretch (pro residues) spans 1 to 14 (MPVPPPPAPPPPPT). The interval 1 to 487 (MPVPPPPAPP…GAPPLPPIPR (487 aa)) is disordered. Residues 21–31 (EKPSLNKTEQA) are compositionally biased toward polar residues. Residues 32 to 49 (GRNALLSDISKGKKLKKT) enclose the WH2 domain. An Asymmetric dimethylarginine modification is found at R33. The tract at residues 45–48 (KLKK) is binds actin. Over residues 64 to 100 (GAGGGYGGGSGGGGGGGSSGGGGNFGGGGPPGLGGLF) the composition is skewed to gly residues. R121 and R130 each carry omega-N-methylarginine. Residues 136-147 (PFSSPSGPGRFP) are compositionally biased toward low complexity. Phosphoserine is present on S138. 2 stretches are compositionally biased toward pro residues: residues 157-170 (PPEP…PPRP) and 178-190 (SLPP…PRPI). S222 is modified (phosphoserine). Pro residues-rich tracts occupy residues 234-243 (FPRPPLPPTP), 269-285 (VPPP…PSTP), and 293-309 (APPP…PLPP). Phosphoserine is present on S324. A compositionally biased stretch (pro residues) spans 328–355 (PTPPLPSPGRSGPLPPPPTERPPPPVRD). T329 carries the post-translational modification Phosphothreonine. S334 carries the phosphoserine modification. XRSGPXPPXP motif repeat units follow at residues 336–345 (GRSGPLPPPP), 358–367 (GRSGPLPPPP), and 394–403 (PRSGPRPPLP). Pro residues predominate over residues 397-418 (GPRPPLPPDRPGAGAPPPPPPS). Residues 419–428 (TSVRNGFQDS) are compositionally biased toward polar residues. Positions 464–478 (ARSESRSGSNRRERG) are enriched in basic and acidic residues.

The protein belongs to the verprolin family. As to quaternary structure, binds to WAS within the N-terminal region, at a site distinct from the CDC42-binding site. Binds profilin and actin. Interacts with DBNL. Binds to WASL. Interacts with DBNL. Interacts with FNBP1L (via the SH3 domain). In terms of tissue distribution, isoforms were differentially expressed. One isoform was ubiquitously expressed, another was muscle-specific and another was expressed in the liver, heart and testis.

It localises to the cytoplasmic vesicle. It is found in the cytoplasm. Its subcellular location is the cytoskeleton. The protein resides in the cell projection. The protein localises to the ruffle. In terms of biological role, plays a role in the reorganization of the actin cytoskeleton. Contributes with NCK1 and GRB2 in the recruitment and activation of WASL. Plays a role in the formation of cell ruffles. May participate in regulating the subcellular localization of WASL, resulting in the disassembly of stress fibers in favor of filopodia formation. The chain is WAS/WASL-interacting protein family member 1 (Wipf1) from Rattus norvegicus (Rat).